Reading from the N-terminus, the 454-residue chain is GTPase Der (454 aa).

EngA-type G domains are found at residues 4–167 (AIVA…SEDK) and 188–363 (LELA…ASWQ). GTP is bound by residues 10–17 (GKPNVGKS), 56–60 (DTPGL), 121–124 (NKTE), 194–201 (GRPNCGKS), 241–245 (DTAGV), and 306–309 (NKWD). Residues 364 to 450 (KRVTTGTLNQ…PVRLSFVKGK (87 aa)) form the KH-like domain.

The protein belongs to the TRAFAC class TrmE-Era-EngA-EngB-Septin-like GTPase superfamily. EngA (Der) GTPase family. As to quaternary structure, associates with the 50S ribosomal subunit.

In terms of biological role, GTPase that plays an essential role in the late steps of ribosome biogenesis. The sequence is that of GTPase Der from Orientia tsutsugamushi (strain Ikeda) (Rickettsia tsutsugamushi).